We begin with the raw amino-acid sequence, 349 residues long: 5-deoxyribose 1-phosphate isomerase (349 aa).

Residues 49–51, Arg92, and Gln199 each bind substrate; that span reads RGA. The active-site Proton donor is the Asp240. Position 250-251 (250-251) interacts with substrate; the sequence is NK.

It belongs to the EIF-2B alpha/beta/delta subunits family. DrdI subfamily.

The enzyme catalyses 5-deoxy-alpha-D-ribose 1-phosphate = 5-deoxy-D-ribulose 1-phosphate. It participates in carbohydrate degradation. Catalyzes the isomerization of 5-deoxy-alpha-D-ribose 1-phosphate to 5-deoxy-D-ribulose 1-phosphate, as part of a 5-deoxyribose salvage pathway that recycles this toxic radical SAM enzyme by-product to mainstream metabolites. This Clostridium botulinum (strain Kyoto / Type A2) protein is 5-deoxyribose 1-phosphate isomerase.